An 810-amino-acid polypeptide reads, in one-letter code: E3 ubiquitin-protein ligase RNF10 (810 aa).

Residues 1–31 (MPQSSPSAAATASDMDKNSGSSSSSASSGSS) show a composition bias toward low complexity. Positions 1-119 (MPQSSPSAAA…SFNGGRRDEV (119 aa)) are disordered. Ser5 is subject to Phosphoserine. The span at 76–92 (NFINQSRRSNSQKSKTF) shows a compositional bias: polar residues. The interval 101–185 (GGSSKLFSSS…FNKELFLQAN (85 aa)) is interaction with MEOX2. Positions 104–113 (SKLFSSSFNG) are enriched in low complexity. Residues Ser110 and Ser128 each carry the phosphoserine modification. An RING-type zinc finger spans residues 225 to 267 (CPICLYPPTAAKITRCGHIFCWACILHYLSLSEKTWSKCPICY). Disordered regions lie at residues 598–623 (KRKRQRQKKAREERRRERRIEMEENK), 652–674 (DSALGSTSTEGRGALSLSPLSRS), 722–759 (ADVWPKTAPKKDENTLGPPAPVDSDGESDNSDRVPVPS), and 775–810 (LDTPVTSDPLSEEKGGKKRKKQKQKLLFSTSVVHTK). The segment covering 607–623 (AREERRRERRIEMEENK) has biased composition (basic and acidic residues). Over residues 652-661 (DSALGSTSTE) the composition is skewed to polar residues. Over residues 662 to 674 (GRGALSLSPLSRS) the composition is skewed to low complexity. Basic and acidic residues predominate over residues 722 to 735 (ADVWPKTAPKKDEN). Positions 801-810 (LFSTSVVHTK) are enriched in polar residues.

The protein belongs to the RNF10 family. In terms of assembly, interacts with MEOX2.

It is found in the cytoplasm. Its subcellular location is the nucleus. The catalysed reaction is S-ubiquitinyl-[E2 ubiquitin-conjugating enzyme]-L-cysteine + [acceptor protein]-L-lysine = [E2 ubiquitin-conjugating enzyme]-L-cysteine + N(6)-ubiquitinyl-[acceptor protein]-L-lysine.. It functions in the pathway protein modification; protein ubiquitination. Functionally, E3 ubiquitin-protein ligase that catalyzes monoubiquitination of 40S ribosomal proteins RPS2/us5 and RPS3/us3 in response to ribosome stalling. Part of a ribosome quality control that takes place when ribosomes have stalled during translation initiation (iRQC): RNF10 acts by mediating monoubiquitination of RPS2/us5 and RPS3/us3, promoting their degradation by the proteasome. Also promotes ubiquitination of 40S ribosomal proteins in response to ribosome stalling during translation elongation. The action of RNF10 in iRQC is counteracted by USP10. May also act as a transcriptional factor involved in the regulation of MAG (Myelin-associated glycoprotein) expression. Acts as a regulator of Schwann cell differentiation and myelination. The protein is E3 ubiquitin-protein ligase RNF10 (RNF10) of Bos taurus (Bovine).